The following is a 549-amino-acid chain: Glucose-6-phosphate isomerase (549 aa).

The Proton donor role is filled by glutamate 355. Catalysis depends on residues histidine 386 and lysine 514.

The protein belongs to the GPI family.

Its subcellular location is the cytoplasm. The enzyme catalyses alpha-D-glucose 6-phosphate = beta-D-fructose 6-phosphate. It functions in the pathway carbohydrate biosynthesis; gluconeogenesis. The protein operates within carbohydrate degradation; glycolysis; D-glyceraldehyde 3-phosphate and glycerone phosphate from D-glucose: step 2/4. Its function is as follows. Catalyzes the reversible isomerization of glucose-6-phosphate to fructose-6-phosphate. This chain is Glucose-6-phosphate isomerase, found in Salmonella agona (strain SL483).